The following is a 45-amino-acid chain: Thymosin beta (45 aa).

Positions 1–45 (MADKPNMTEITSFDKTKLRKTETQEKNPLPTKETIEQERQGESTP) are disordered. Basic and acidic residues-rich tracts occupy residues 12-25 (SFDKTKLRKTETQE) and 33-45 (ETIEQERQGESTP).

It belongs to the thymosin beta family.

It localises to the cytoplasm. Its subcellular location is the cytoskeleton. Plays an important role in the organization of the cytoskeleton. Binds to and sequesters actin monomers (G actin) and therefore inhibits actin polymerization. This is Thymosin beta (tmsb) from Danio rerio (Zebrafish).